The primary structure comprises 429 residues: UDP-N-acetylglucosamine 1-carboxyvinyltransferase (429 aa).

Phosphoenolpyruvate is bound at residue 22–23 (KN). Arg-102 lines the UDP-N-acetyl-alpha-D-glucosamine pocket. The active-site Proton donor is Cys-126. Position 126 is a 2-(S-cysteinyl)pyruvic acid O-phosphothioketal (Cys-126). UDP-N-acetyl-alpha-D-glucosamine-binding positions include 131–135 (RPVDL), Asp-316, and Ile-338.

It belongs to the EPSP synthase family. MurA subfamily.

The protein resides in the cytoplasm. The enzyme catalyses phosphoenolpyruvate + UDP-N-acetyl-alpha-D-glucosamine = UDP-N-acetyl-3-O-(1-carboxyvinyl)-alpha-D-glucosamine + phosphate. Its pathway is cell wall biogenesis; peptidoglycan biosynthesis. In terms of biological role, cell wall formation. Adds enolpyruvyl to UDP-N-acetylglucosamine. The sequence is that of UDP-N-acetylglucosamine 1-carboxyvinyltransferase from Methylobacterium sp. (strain 4-46).